A 49-amino-acid chain; its full sequence is Glycolactin (49 aa).

It belongs to the pancreatic ribonuclease family. Post-translationally, glycosylated. Milk.

The protein localises to the secreted. In terms of biological role, manifests poly C-specific RNase activity toward yeast tRNA, elicits a dose-dependent inhibition of cell-free translation, inhibits formation of superoxide ions in vitro and inhibits the hemagglutinating activities of soybean lectin and Ricinus communis agglutinin 120. Inhibits HIV-1 reverse transcriptase. The protein is Glycolactin of Bos taurus (Bovine).